The primary structure comprises 396 residues: Elongation factor Tu (396 aa).

The tr-type G domain maps to 10 to 206 (KPHVNVGTIG…VLDTYIPEPE (197 aa)). The segment at 19–26 (GHVDHGKT) is G1. 19 to 26 (GHVDHGKT) contributes to the GTP binding site. Residue Thr26 coordinates Mg(2+). The tract at residues 60 to 64 (GITIN) is G2. Positions 81–84 (DCPG) are G3. GTP-binding positions include 81–85 (DCPGH) and 136–139 (NKCD). The interval 136–139 (NKCD) is G4. A G5 region spans residues 174 to 176 (SAT).

It belongs to the TRAFAC class translation factor GTPase superfamily. Classic translation factor GTPase family. EF-Tu/EF-1A subfamily. Monomer.

It is found in the cytoplasm. It catalyses the reaction GTP + H2O = GDP + phosphate + H(+). In terms of biological role, GTP hydrolase that promotes the GTP-dependent binding of aminoacyl-tRNA to the A-site of ribosomes during protein biosynthesis. This is Elongation factor Tu from Psychrobacter arcticus (strain DSM 17307 / VKM B-2377 / 273-4).